The sequence spans 434 residues: Serine/threonine transporter SstT (434 aa).

The next 9 membrane-spanning stretches (helical) occupy residues 14–34 (IVIG…WSFI), 41–61 (FVGA…MSAI), 72–92 (FGTV…AAVA), 135–155 (ALVE…GSGL), 172–192 (TVSA…VGLL), 210–230 (LLML…PFMV), 282–302 (ISIP…VSIM), 316–336 (IFLA…VSGI), and 351–371 (FGIS…IGVV). The segment at 414–434 (KGTAEVVTPEKANEAEESEQV) is disordered.

This sequence belongs to the dicarboxylate/amino acid:cation symporter (DAACS) (TC 2.A.23) family.

It localises to the cell membrane. It catalyses the reaction L-serine(in) + Na(+)(in) = L-serine(out) + Na(+)(out). The catalysed reaction is L-threonine(in) + Na(+)(in) = L-threonine(out) + Na(+)(out). Involved in the import of serine and threonine into the cell, with the concomitant import of sodium (symport system). In Lacticaseibacillus paracasei (strain ATCC 334 / BCRC 17002 / CCUG 31169 / CIP 107868 / KCTC 3260 / NRRL B-441) (Lactobacillus paracasei), this protein is Serine/threonine transporter SstT.